Here is a 363-residue protein sequence, read N- to C-terminus: Zinc phosphodiesterase ELAC protein 1 (363 aa).

Zn(2+) is bound by residues His-62, His-64, Asp-66, His-67, His-182, Asp-253, and His-313. Catalysis depends on Asp-66, which acts as the Proton acceptor.

Belongs to the RNase Z family. In terms of assembly, homodimer. Zn(2+) is required as a cofactor. Widely expressed. Expressed in heart, brain, placenta, lung, liver, skeletal muscle, kidney and pancreas.

It is found in the cytoplasm. Its subcellular location is the cytosol. The protein resides in the nucleus. The enzyme catalyses Endonucleolytic cleavage of RNA, removing extra 3' nucleotides from tRNA precursor, generating 3' termini of tRNAs. A 3'-hydroxy group is left at the tRNA terminus and a 5'-phosphoryl group is left at the trailer molecule.. Functionally, zinc phosphodiesterase, which displays some tRNA 3'-processing endonuclease activity. Specifically involved in tRNA repair: acts downstream of the ribosome-associated quality control (RQC) pathway by removing a 2',3'-cyclic phosphate from tRNAs following cleavage by ANKZF1. tRNAs are then processed by TRNT1. In Homo sapiens (Human), this protein is Zinc phosphodiesterase ELAC protein 1.